A 150-amino-acid chain; its full sequence is Large ribosomal subunit protein bL9 (150 aa).

Belongs to the bacterial ribosomal protein bL9 family.

Binds to the 23S rRNA. This chain is Large ribosomal subunit protein bL9, found in Leuconostoc citreum (strain KM20).